A 505-amino-acid polypeptide reads, in one-letter code: Deoxyguanosinetriphosphate triphosphohydrolase (505 aa).

An HD domain is found at R66–C273.

This sequence belongs to the dGTPase family. Type 1 subfamily. Homotetramer. Mg(2+) is required as a cofactor.

It carries out the reaction dGTP + H2O = 2'-deoxyguanosine + triphosphate + H(+). In terms of biological role, dGTPase preferentially hydrolyzes dGTP over the other canonical NTPs. The chain is Deoxyguanosinetriphosphate triphosphohydrolase from Escherichia coli (strain K12 / MC4100 / BW2952).